Consider the following 202-residue polypeptide: Small ribosomal subunit protein uS4c (202 aa).

Residues 90–151 (MRLDNTIFRL…KQKSRFIITK (62 aa)) enclose the S4 RNA-binding domain.

Belongs to the universal ribosomal protein uS4 family. As to quaternary structure, part of the 30S ribosomal subunit. Contacts protein S5. The interaction surface between S4 and S5 is involved in control of translational fidelity.

The protein localises to the plastid. It is found in the chloroplast. In terms of biological role, one of the primary rRNA binding proteins, it binds directly to 16S rRNA where it nucleates assembly of the body of the 30S subunit. Its function is as follows. With S5 and S12 plays an important role in translational accuracy. This chain is Small ribosomal subunit protein uS4c (rps4), found in Plagiochila adianthoides (Liverwort).